A 73-amino-acid polypeptide reads, in one-letter code: Conotoxin Bt11.1 (73 aa).

The signal sequence occupies residues 1 to 20 (MKLCVAFLLVLVILPSVIGG). Residues 21-35 (KPSERTLSGATRRGD) constitute a propeptide that is removed on maturation. 4 cysteine pairs are disulfide-bonded: C39–C53, C46–C58, C52–C63, and C57–C70.

It belongs to the conotoxin I1 superfamily. As to expression, expressed by the venom duct.

The protein resides in the secreted. The protein is Conotoxin Bt11.1 of Conus betulinus (Beech cone).